The following is a 28-amino-acid chain: Kalata-B12 (28 aa).

The segment at residues 1–28 is a cross-link (cyclopeptide (Gly-Asp)); that stretch reads GSLCGDTCFVLGCNDSSCSCNYPICVKD. Intrachain disulfides connect Cys4–Cys18, Cys8–Cys20, and Cys13–Cys25.

In terms of processing, this is a cyclic peptide.

Functionally, probably participates in a plant defense mechanism. The polypeptide is Kalata-B12 (Oldenlandia affinis).